The sequence spans 759 residues: RNA-binding protein 28 (759 aa).

N-acetylalanine is present on Ala-2. The RRM 1 domain maps to 4–80 (LTLFVGRLPP…CKINVTVAKK (77 aa)). The tract at residues 84-105 (NKTKEKGKNENSECPKKEPKAK) is disordered. The segment covering 85 to 101 (KTKEKGKNENSECPKKE) has biased composition (basic and acidic residues). The 78-residue stretch at 114–191 (ARLIIRNLSF…RTVAVDWAVA (78 aa)) folds into the RRM 2 domain. Ser-122 bears the Phosphoserine mark. The tract at residues 201-330 (VSAIGEEKSH…NKKKRKLPSD (130 aa)) is disordered. Residues 205-224 (GEEKSHESKHQESVKKKGRE) show a composition bias toward basic and acidic residues. 2 stretches are compositionally biased toward acidic residues: residues 225–256 (EEDM…EEEN) and 284–313 (SEED…EEQE). RRM domains follow at residues 335–419 (KTVF…LAVT) and 487–597 (TRLC…RSLQ). Phosphoserine is present on Ser-397. Residues 594 to 759 (RSLQKMRSKP…LAKRSKWFDS (166 aa)) form a disordered region. The span at 615–640 (PAKDQQQKAAQHHTEEQSKVPPEQKR) shows a compositional bias: basic and acidic residues. Lys-653 participates in a covalent cross-link: Glycyl lysine isopeptide (Lys-Gly) (interchain with G-Cter in SUMO2). Residues 689 to 698 (VKPVHPKKPK) are compositionally biased toward basic residues. The span at 700 to 715 (QINQWKQEKQQLSSEQ) shows a compositional bias: polar residues.

As to quaternary structure, interacts with U1, U2, U4, U5, and U6 spliceosomal small nuclear RNAs (snRNAs). As to expression, ubiquitously expressed.

It is found in the nucleus. Its subcellular location is the nucleolus. Nucleolar component of the spliceosomal ribonucleoprotein complexes. The protein is RNA-binding protein 28 (RBM28) of Homo sapiens (Human).